Consider the following 417-residue polypeptide: Probable sugar-binding periplasmic protein (417 aa).

The first 21 residues, 1–21 (MLRKLLIGTALATSFAFSAHA), serve as a signal peptide directing secretion.

It belongs to the bacterial solute-binding protein 1 family.

Its subcellular location is the periplasm. Part of a binding-protein-dependent transport system for a sugar. The protein is Probable sugar-binding periplasmic protein of Mesorhizobium japonicum (strain LMG 29417 / CECT 9101 / MAFF 303099) (Mesorhizobium loti (strain MAFF 303099)).